Consider the following 323-residue polypeptide: Leucine-rich repeat-containing protein 46 (323 aa).

LRR repeat units follow at residues 49–70 (ELET…EKLR), 71–92 (NIHS…ACIT), 93–114 (SLRF…LDLQ), and 115–135 (YLQF…DELP). Residues 146 to 188 (NPCTNQEGYRKMVIGALPLLLDLDKQPILERWTSDEEDKSSDD) enclose the LRRCT domain. The residue at position 178 (Thr178) is a Phosphothreonine. Phosphoserine occurs at positions 179, 185, and 186. Residues 203-228 (RGFFKDLEQELHQHQERRQQAALTEH) adopt a coiled-coil conformation. Residues 249–323 (MAGDCSSTAT…TKMTNKKSTK (75 aa)) form a disordered region. Over residues 267–316 (PKATSSTQTASTTKKQVSKNQKSSVQARKGALAATTSKTSQAATPSMTKM) the composition is skewed to low complexity. At Ser303 the chain carries Phosphoserine.

In terms of tissue distribution, testis-specific (at protein level).

The protein localises to the cell projection. Its subcellular location is the cilium. It is found in the flagellum. Functionally, required for normal spermatogenesis and male fertility. Plays an important role in sperm flagellum biogenesis. This is Leucine-rich repeat-containing protein 46 (Lrrc46) from Mus musculus (Mouse).